The chain runs to 160 residues: Transcription elongation factor GreB (160 aa).

It belongs to the GreA/GreB family. GreB subfamily.

Necessary for efficient RNA polymerase transcription elongation past template-encoded arresting sites. The arresting sites in DNA have the property of trapping a certain fraction of elongating RNA polymerases that pass through, resulting in locked ternary complexes. Cleavage of the nascent transcript by cleavage factors such as GreA or GreB allows the resumption of elongation from the new 3'terminus. GreB releases sequences of up to 9 nucleotides in length. The polypeptide is Transcription elongation factor GreB (Vibrio vulnificus (strain CMCP6)).